The primary structure comprises 318 residues: Methionyl-tRNA formyltransferase (318 aa).

(6S)-5,6,7,8-tetrahydrofolate is bound at residue 110–113; it reads SLLP.

This sequence belongs to the Fmt family.

The enzyme catalyses L-methionyl-tRNA(fMet) + (6R)-10-formyltetrahydrofolate = N-formyl-L-methionyl-tRNA(fMet) + (6S)-5,6,7,8-tetrahydrofolate + H(+). Attaches a formyl group to the free amino group of methionyl-tRNA(fMet). The formyl group appears to play a dual role in the initiator identity of N-formylmethionyl-tRNA by promoting its recognition by IF2 and preventing the misappropriation of this tRNA by the elongation apparatus. This chain is Methionyl-tRNA formyltransferase, found in Ligilactobacillus salivarius (strain UCC118) (Lactobacillus salivarius).